Consider the following 166-residue polypeptide: Lipoprotein signal peptidase (166 aa).

Transmembrane regions (helical) follow at residues 12–32 (WLWL…LILQ), 70–90 (WFFA…MYRS), and 102–122 (ALII…GFVV). Residues aspartate 123 and aspartate 141 contribute to the active site. A helical transmembrane segment spans residues 137-157 (FNLADSAICIGAALIVLEGFL).

Belongs to the peptidase A8 family.

The protein resides in the cell inner membrane. The catalysed reaction is Release of signal peptides from bacterial membrane prolipoproteins. Hydrolyzes -Xaa-Yaa-Zaa-|-(S,diacylglyceryl)Cys-, in which Xaa is hydrophobic (preferably Leu), and Yaa (Ala or Ser) and Zaa (Gly or Ala) have small, neutral side chains.. Its pathway is protein modification; lipoprotein biosynthesis (signal peptide cleavage). This protein specifically catalyzes the removal of signal peptides from prolipoproteins. The chain is Lipoprotein signal peptidase from Salmonella agona (strain SL483).